The primary structure comprises 1167 residues: DNA-directed RNA polymerase subunit beta (1167 aa).

This sequence belongs to the RNA polymerase beta chain family. The RNAP catalytic core consists of 2 alpha, 1 beta, 1 beta' and 1 omega subunit. When a sigma factor is associated with the core the holoenzyme is formed, which can initiate transcription.

It carries out the reaction RNA(n) + a ribonucleoside 5'-triphosphate = RNA(n+1) + diphosphate. DNA-dependent RNA polymerase catalyzes the transcription of DNA into RNA using the four ribonucleoside triphosphates as substrates. In Treponema denticola (strain ATCC 35405 / DSM 14222 / CIP 103919 / JCM 8153 / KCTC 15104), this protein is DNA-directed RNA polymerase subunit beta.